The following is a 170-amino-acid chain: Large ribosomal subunit protein uL11 (170 aa).

The protein belongs to the universal ribosomal protein uL11 family. In terms of assembly, part of the ribosomal stalk of the 50S ribosomal subunit. Interacts with L10 and the large rRNA to form the base of the stalk. L10 forms an elongated spine to which L12 dimers bind in a sequential fashion forming a multimeric L10(L12)X complex.

Its function is as follows. Forms part of the ribosomal stalk which helps the ribosome interact with GTP-bound translation factors. The polypeptide is Large ribosomal subunit protein uL11 (Sulfolobus acidocaldarius (strain ATCC 33909 / DSM 639 / JCM 8929 / NBRC 15157 / NCIMB 11770)).